We begin with the raw amino-acid sequence, 1207 residues long: Plasma membrane calcium-transporting ATPase 4 (1207 aa).

Topologically, residues 1–100 are cytoplasmic; sequence MTNPTEHTLP…KTFLELVWEA (100 aa). Phosphoserine is present on S13. The chain crosses the membrane as a helical span at residues 101 to 121; that stretch reads LQDVTLIILEIAAIISLVLSF. At 122–147 the chain is on the extracellular side; the sequence is YRPPGGENEQCGLAVTSPEDEGEAEA. The chain crosses the membrane as a helical span at residues 148–168; it reads GWIEGAAILFSVIIVVLVTAF. The Cytoplasmic segment spans residues 169–368; sequence NDWSKEKQFR…LAVQIGKAGL (200 aa). The disordered stretch occupies residues 294 to 317; the sequence is EEEKKKKGKKQGVPENRNKAKTQD. Phosphoserine is present on residues S328 and S334. A helical transmembrane segment spans residues 369–389; that stretch reads IMSAITVLILILYFVIDNFVI. The Extracellular segment spans residues 390-408; the sequence is QRRPWLAECTPIYVQYFVK. The chain crosses the membrane as a helical span at residues 409–429; that stretch reads FFIIGVTVLVVAVPEGLPLAV. Over 430-843 the chain is Cytoplasmic; that stretch reads TISLAYSVKK…RNVYDSISKF (414 aa). D465 acts as the 4-aspartylphosphate intermediate in catalysis. Mg(2+)-binding residues include D785 and D789. The chain crosses the membrane as a helical span at residues 844–864; the sequence is LQFQLTVNVVAVIVAFTGACI. Residues 865–871 are Extracellular-facing; the sequence is TQDSPLK. The helical transmembrane segment at 872 to 892 threads the bilayer; it reads AVQMLWVNLIMDTFASLALAT. Topologically, residues 893–918 are cytoplasmic; that stretch reads EPPTDSLLKRRPYGRNKPLISRTMMK. Residues 919-939 form a helical membrane-spanning segment; the sequence is NILGHAVYQLTVIFFLVFAGE. The Extracellular portion of the chain corresponds to 940-957; the sequence is KFFDIDSGRRAPLHSPPS. Residues 958-977 traverse the membrane as a helical segment; the sequence is QHYTIIFNTFVLMQLFNEIN. At 978–994 the chain is on the cytoplasmic side; the sequence is SRKIHGERNVFSGIFRN. Residues 995–1015 form a helical membrane-spanning segment; the sequence is LIFCSVVLGTFISQIIIVEFG. At 1016 to 1028 the chain is on the extracellular side; that stretch reads GKPFSCTKLTLSQ. The helical transmembrane segment at 1029–1049 threads the bilayer; the sequence is WFWCLFIGIGELLWGQVISTI. The Cytoplasmic segment spans residues 1050-1207; it reads PTQSLKFLKE…SPLHSLETSV (158 aa). The tract at residues 1086–1103 is calmodulin-binding subdomain A; that stretch reads LRRGQILWFRGLNRIQTQ. T1102 is subject to Phosphothreonine; by PKC. Residues 1104–1113 form a calmodulin-binding subdomain B region; it reads IKVVKAFHSS. Positions 1159 to 1181 are disordered; that stretch reads VSKPGTKTSSLDGEVTPQTNKNN. The span at 1163-1181 shows a compositional bias: polar residues; the sequence is GTKTSSLDGEVTPQTNKNN.

The protein belongs to the cation transport ATPase (P-type) (TC 3.A.3) family. Type IIB subfamily. In terms of assembly, interacts with PDZD11. Interacts with SLC35G1 and STIM1. Interacts with calmodulin. As to expression, isoform 1 is detected in brain, heart, liver, testis and epididymis. Isoform 2 is detected in brain (at protein level), heart, seminal vesicle and epididymis. There is a shift in expression from isoform 1 to isoform 2 along the length of the epididymis from caput to cauda (at protein level).

It localises to the cell membrane. It is found in the cell projection. Its subcellular location is the cilium. The protein resides in the flagellum membrane. The enzyme catalyses Ca(2+)(in) + ATP + H2O = Ca(2+)(out) + ADP + phosphate + H(+). Its activity is regulated as follows. Activated by calcium/calmodulin. Functionally, calcium/calmodulin-regulated and magnesium-dependent enzyme that catalyzes the hydrolysis of ATP coupled with the transport of calcium out of the cell. By regulating sperm cells calcium homeostasis, may play a role in sperm motility. This Bos taurus (Bovine) protein is Plasma membrane calcium-transporting ATPase 4.